Consider the following 1752-residue polypeptide: DNA-directed RNA polymerase II subunit rpb1 (1752 aa).

Residues Cys69, Cys72, Cys79, His82, Cys109, Cys112, Cys150, and Cys175 each coordinate Zn(2+). Asp487, Asp489, and Asp491 together coordinate Mg(2+). The interval 816–828 is bridging helix; the sequence is PQEFFFHAMAGRE. A Glycyl lysine isopeptide (Lys-Gly) (interchain with G-Cter in ubiquitin) cross-link involves residue Lys1252. Phosphoserine occurs at positions 1489, 1499, 1506, and 1529. Tyr1531 bears the Phosphotyrosine mark. Positions 1554 to 1752 are disordered; the sequence is TSPSYSPSSP…SPSYSPTSPS (199 aa). 5 tandem repeats follow at residues 1558-1564, 1578-1584, 1585-1591, 1592-1598, and 1599-1605. Residues 1558 to 1752 form a C-terminal domain (CTD); 26 X 7 AA approximate tandem repeats of Y-S-P-[TS]-S-P-S region; sequence YSPSSPGYST…SPSYSPTSPS (195 aa). The stretch at 1606–1612 is one 6; approximate repeat; that stretch reads YSATSPS. A run of 20 repeats spans residues 1613-1619, 1620-1626, 1627-1633, 1634-1640, 1641-1647, 1648-1654, 1655-1661, 1662-1668, 1669-1675, 1676-1682, 1683-1689, 1690-1696, 1697-1703, 1704-1710, 1711-1717, 1718-1724, 1725-1731, 1732-1738, 1739-1745, and 1746-1752.

Belongs to the RNA polymerase beta' chain family. Component of the RNA polymerase II (Pol II) complex consisting of 12 subunits. Post-translationally, the tandem 7 residues repeats in the C-terminal domain (CTD) can be highly phosphorylated. The phosphorylation activates Pol II. Phosphorylation occurs mainly at residues 'Ser-2' and 'Ser-5' of the heptapeptide repeat. The phosphorylation state is believed to result from the balanced action of site-specific CTD kinases and phosphatase, and a 'CTD code' that specifies the position of Pol II within the transcription cycle has been proposed. In terms of processing, following transcription stress, the elongating form of RNA polymerase II (RNA pol IIo) is polyubiquitinated via 'Lys-63'-linkages on Lys-1252 at DNA damage sites without leading to degradation: ubiquitination promotes RNA pol IIo backtracking to allow access by the transcription-coupled nucleotide excision repair (TC-NER) machinery. Subsequent def1-dependent polyubiquitination by the elongin complex via 'Lys-48'-linkages may lead to proteasome-mediated degradation; presumably at stalled RNA pol II where TC-NER has failed, to halt global transcription and enable 'last resort' DNA repair pathways.

It is found in the nucleus. The catalysed reaction is RNA(n) + a ribonucleoside 5'-triphosphate = RNA(n+1) + diphosphate. Its function is as follows. DNA-dependent RNA polymerase catalyzes the transcription of DNA into RNA using the four ribonucleoside triphosphates as substrates. Largest and catalytic component of RNA polymerase II which synthesizes mRNA precursors and many functional non-coding RNAs. Forms the polymerase active center together with the second largest subunit. Pol II is the central component of the basal RNA polymerase II transcription machinery. It is composed of mobile elements that move relative to each other. RPB1 is part of the core element with the central large cleft, the clamp element that moves to open and close the cleft and the jaws that are thought to grab the incoming DNA template. At the start of transcription, a single-stranded DNA template strand of the promoter is positioned within the central active site cleft of Pol II. A bridging helix emanates from RPB1 and crosses the cleft near the catalytic site and is thought to promote translocation of Pol II by acting as a ratchet that moves the RNA-DNA hybrid through the active site by switching from straight to bent conformations at each step of nucleotide addition. During transcription elongation, Pol II moves on the template as the transcript elongates. Elongation is influenced by the phosphorylation status of the C-terminal domain (CTD) of Pol II largest subunit (RPB1), which serves as a platform for assembly of factors that regulate transcription initiation, elongation, termination and mRNA processing. The chain is DNA-directed RNA polymerase II subunit rpb1 (rpb1) from Schizosaccharomyces pombe (strain 972 / ATCC 24843) (Fission yeast).